A 690-amino-acid chain; its full sequence is MSLYERESEESAVAGPSLDSEDQQQRIEARRLRIVTRIEAKRREALGEDLKILKKKTEEPRKSHKQTEDSRQRLGKLVNDGSQLVTNIQIATDARETQRRGEEEELKRLRREKLDNEAKSSLEKFEEITKRWTLDKAKQVPQKMWEILNTQQQQCAQLIEDKNNLISDLQKELRRKDDQYVKDLKKQAEDIDLLVERMEEQIKNLIKTYRQELLQIEKVFELERRELLTANRNTWEQGMQGRRDKELESLMSRMKKVEEYENQLKQLRVQDGEEYNMIKIKLETDVQILQQQLQQMKATYQLNQEKLEYNYQVLKKRDEENTITKSQQKRKITRLQDVLNNLRLKQAKQVKQYKEENQSLMDDYKRIVEQYKELQKKMRHFSAVDAKMFQDIWLMNEEEMKQLVQKALEADQVIQEQQLGMCWEPPDLCFMDNVGPLLGKLKDQKSAMSLAQEVMSSHAPGDQSSASEGETDGRQCREVSAETVKHILELLCDESGFLIENKLTRLLSPLERDERSLIKLDSIFGALGVTVEEDVYKLVEFLCRYKREPEEEGDAGGSLEPGSKAHGLIHSNDVLRAVKAFVMDFQKPRGKVSRLRLMEERDSREDTEYWAAAAKAIPESRFRVWDALESALEKYYDVLGSRGQLITETVSLRQQNTELRTLLHQYLNSKINVELEIPPTQMMQGEYPHT.

Disordered regions lie at residues 1 to 25 (MSLYERESEESAVAGPSLDSEDQQQ) and 49 to 72 (DLKILKKKTEEPRKSHKQTEDSRQ). Positions 92–419 (TDARETQRRG…ADQVIQEQQL (328 aa)) form a coiled coil. The segment at 451 to 476 (AQEVMSSHAPGDQSSASEGETDGRQC) is disordered.

The protein belongs to the DRC1 family. In terms of assembly, component of the nexin-dynein regulatory complex (N-DRC).

It is found in the cytoplasm. Its subcellular location is the cytoskeleton. The protein resides in the cilium axoneme. It localises to the flagellum axoneme. Its function is as follows. Component of the nexin-dynein regulatory complex (N-DRC) a key regulator of ciliary/flagellar motility which maintains the alignment and integrity of the distal axoneme and regulates microtubule sliding in motile axonemes. Plays a critical role in the assembly of N-DRC and also stabilizes the assembly of multiple inner dynein arms and radial spokes. Coassembles with CCDC65/DRC2 to form a central scaffold needed for assembly of the N-DRC and its attachment to the outer doublet microtubules. The chain is Dynein regulatory complex protein 1 (drc1) from Xenopus laevis (African clawed frog).